Here is a 171-residue protein sequence, read N- to C-terminus: Large ribosomal subunit protein uL10 (171 aa).

The protein belongs to the universal ribosomal protein uL10 family. Part of the ribosomal stalk of the 50S ribosomal subunit. The N-terminus interacts with L11 and the large rRNA to form the base of the stalk. The C-terminus forms an elongated spine to which L12 dimers bind in a sequential fashion forming a multimeric L10(L12)X complex.

Forms part of the ribosomal stalk, playing a central role in the interaction of the ribosome with GTP-bound translation factors. The chain is Large ribosomal subunit protein uL10 from Erythrobacter litoralis (strain HTCC2594).